A 214-amino-acid polypeptide reads, in one-letter code: MSDEEKSETRNFFMGYDDLSDSSSDSESRSGPEATASSAPAEPQQSRKRAAEPLPRPDELFRSVSKPAFLYNPLNKAIDWDSRAVRAPEEPPKEFKVWKSSAVPPPQSYVTEENKKKAPAGMDMAIKWSNVYEDNGDDAPQAHRGPAHFLPEEEEEEQQPDSDDDSSSKLSKSAKKRRVETFQQKEKRKRDIGQATSDKNFVEEEKRILRQCLD.

Disordered regions lie at residues 1–66 (MSDE…SVSK) and 81–214 (DSRA…QCLD). The span at 32 to 44 (PEATASSAPAEPQ) shows a compositional bias: low complexity. Basic and acidic residues-rich tracts occupy residues 49-61 (RAAE…DELF) and 81-97 (DSRA…EFKV). Residues 152 to 165 (EEEEEEQQPDSDDD) show a composition bias toward acidic residues. Serine 162 carries the phosphoserine modification. 2 stretches are compositionally biased toward basic and acidic residues: residues 179-192 (VETF…KRDI) and 200-214 (NFVE…QCLD).

The protein belongs to the UPF0690 family.

In Danio rerio (Zebrafish), this protein is UPF0690 protein C1orf52 homolog.